A 251-amino-acid polypeptide reads, in one-letter code: Hydroxyacylglutathione hydrolase (251 aa).

Zn(2+)-binding residues include His53, His55, Asp57, His58, His110, Asp127, and His165.

It belongs to the metallo-beta-lactamase superfamily. Glyoxalase II family. In terms of assembly, monomer. Zn(2+) serves as cofactor.

It catalyses the reaction an S-(2-hydroxyacyl)glutathione + H2O = a 2-hydroxy carboxylate + glutathione + H(+). The protein operates within secondary metabolite metabolism; methylglyoxal degradation; (R)-lactate from methylglyoxal: step 2/2. Thiolesterase that catalyzes the hydrolysis of S-D-lactoyl-glutathione to form glutathione and D-lactic acid. The polypeptide is Hydroxyacylglutathione hydrolase (Escherichia fergusonii (strain ATCC 35469 / DSM 13698 / CCUG 18766 / IAM 14443 / JCM 21226 / LMG 7866 / NBRC 102419 / NCTC 12128 / CDC 0568-73)).